Consider the following 342-residue polypeptide: Galactose mutarotase (342 aa).

Ser14 carries the post-translational modification Phosphoserine. Residues 81–82 (NR), His107, 176–178 (HSY), Asp243, Gln279, and Glu307 contribute to the beta-D-galactose site. The active-site Proton donor is His176. The Proton acceptor role is filled by Glu307.

It belongs to the aldose epimerase family. As to quaternary structure, monomer.

It localises to the cytoplasm. It carries out the reaction alpha-D-galactose = beta-D-galactose. The catalysed reaction is alpha-D-glucose = beta-D-glucose. The protein operates within carbohydrate metabolism; hexose metabolism. It functions in the pathway carbohydrate metabolism; galactose metabolism. Its function is as follows. Mutarotase that catalyzes the interconversion of beta-D-galactose and alpha-D-galactose during galactose metabolism. Beta-D-galactose is metabolized in the liver into glucose 1-phosphate, the primary metabolic fuel, by the action of four enzymes that constitute the Leloir pathway: GALM, GALK1 (galactokinase), GALT (galactose-1-phosphate uridylyltransferase) and GALE (UDP-galactose-4'-epimerase). Involved in the maintenance of the equilibrium between the beta- and alpha-anomers of galactose, therefore ensuring a sufficient supply of the alpha-anomer for GALK1. Also active on D-glucose although shows a preference for galactose over glucose. The protein is Galactose mutarotase of Mus musculus (Mouse).